Reading from the N-terminus, the 259-residue chain is Global transcriptional regulator CodY (259 aa).

The segment at 1-155 (MTLLEKTRKI…GGTVVGMEIL (155 aa)) is GAF domain. The H-T-H motif DNA-binding region spans 203–222 (ASKIADRVGITRSVIVNALR).

It belongs to the CodY family.

It localises to the cytoplasm. In terms of biological role, DNA-binding global transcriptional regulator which is involved in the adaptive response to starvation and acts by directly or indirectly controlling the expression of numerous genes in response to nutrient availability. During rapid exponential growth, CodY is highly active and represses genes whose products allow adaptation to nutrient depletion. The sequence is that of Global transcriptional regulator CodY from Listeria monocytogenes serotype 4b (strain CLIP80459).